The chain runs to 145 residues: D-aminoacyl-tRNA deacylase (145 aa).

The Gly-cisPro motif, important for rejection of L-amino acids motif lies at 137-138 (GP).

The protein belongs to the DTD family. In terms of assembly, homodimer.

The protein localises to the cytoplasm. It catalyses the reaction glycyl-tRNA(Ala) + H2O = tRNA(Ala) + glycine + H(+). The catalysed reaction is a D-aminoacyl-tRNA + H2O = a tRNA + a D-alpha-amino acid + H(+). Functionally, an aminoacyl-tRNA editing enzyme that deacylates mischarged D-aminoacyl-tRNAs. Also deacylates mischarged glycyl-tRNA(Ala), protecting cells against glycine mischarging by AlaRS. Acts via tRNA-based rather than protein-based catalysis; rejects L-amino acids rather than detecting D-amino acids in the active site. By recycling D-aminoacyl-tRNA to D-amino acids and free tRNA molecules, this enzyme counteracts the toxicity associated with the formation of D-aminoacyl-tRNA entities in vivo and helps enforce protein L-homochirality. This Citrobacter koseri (strain ATCC BAA-895 / CDC 4225-83 / SGSC4696) protein is D-aminoacyl-tRNA deacylase.